Reading from the N-terminus, the 343-residue chain is UDP-3-O-acylglucosamine N-acyltransferase (343 aa).

Histidine 238 acts as the Proton acceptor in catalysis.

It belongs to the transferase hexapeptide repeat family. LpxD subfamily. In terms of assembly, homotrimer.

The enzyme catalyses a UDP-3-O-[(3R)-3-hydroxyacyl]-alpha-D-glucosamine + a (3R)-hydroxyacyl-[ACP] = a UDP-2-N,3-O-bis[(3R)-3-hydroxyacyl]-alpha-D-glucosamine + holo-[ACP] + H(+). Its pathway is bacterial outer membrane biogenesis; LPS lipid A biosynthesis. Functionally, catalyzes the N-acylation of UDP-3-O-acylglucosamine using 3-hydroxyacyl-ACP as the acyl donor. Is involved in the biosynthesis of lipid A, a phosphorylated glycolipid that anchors the lipopolysaccharide to the outer membrane of the cell. This chain is UDP-3-O-acylglucosamine N-acyltransferase, found in Marinomonas sp. (strain MWYL1).